Reading from the N-terminus, the 376-residue chain is Cytoplasmic tRNA 2-thiolation protein 1 (376 aa).

This sequence belongs to the TtcA family. CTU1/NCS6/ATPBD3 subfamily.

Its subcellular location is the cytoplasm. It functions in the pathway tRNA modification; 5-methoxycarbonylmethyl-2-thiouridine-tRNA biosynthesis. Its function is as follows. Plays a central role in 2-thiolation of mcm(5)S(2)U at tRNA wobble positions of tRNA(Lys), tRNA(Glu) and tRNA(Gln). Directly binds tRNAs and probably acts by catalyzing adenylation of tRNAs, an intermediate required for 2-thiolation. It is unclear whether it acts as a sulfurtransferase that transfers sulfur from thiocarboxylated URM1 onto the uridine of tRNAs at wobble position. Prior mcm(5) tRNA modification by the elongator complex is required for 2-thiolation. May also be involved in protein urmylation. The protein is Cytoplasmic tRNA 2-thiolation protein 1 of Scheffersomyces stipitis (strain ATCC 58785 / CBS 6054 / NBRC 10063 / NRRL Y-11545) (Yeast).